A 702-amino-acid chain; its full sequence is 1,4-alpha-glucan-branching enzyme (702 aa).

Ala-2 is modified (N-acetylalanine). Residues 62–63 and 91–93 each bind substrate; these read NE and WAP. Trp-107 provides a ligand contact to (1,4-alpha-D-glucosyl)n. 118–121 contacts substrate; sequence DYGK. Residue Lys-143 coordinates (1,4-alpha-D-glucosyl)n. Tyr-173 carries the post-translational modification Phosphotyrosine. Residue 333–336 participates in substrate binding; that stretch reads EILR. Catalysis depends on Asp-357, which acts as the Nucleophile. Glu-412 serves as the catalytic Proton donor.

The protein belongs to the glycosyl hydrolase 13 family. GlgB subfamily. In terms of assembly, monomer.

The enzyme catalyses Transfers a segment of a (1-&gt;4)-alpha-D-glucan chain to a primary hydroxy group in a similar glucan chain.. Its pathway is glycan biosynthesis; glycogen biosynthesis. Functionally, glycogen-branching enzyme participates in the glycogen biosynthetic process along with glycogenin and glycogen synthase. Generates alpha-1,6-glucosidic branches from alpha-1,4-linked glucose chains, to increase solubility of the glycogen polymer. The chain is 1,4-alpha-glucan-branching enzyme (GBE1) from Homo sapiens (Human).